The following is a 120-amino-acid chain: MSYRKLGRTSSQRKAMLRDLTTDLIINERIETTETRAKELRSVVEKMITLGKRGDLHARRQAAAYIRNEVANEENNQDALQKLFSDIATRYEERQGGYTRIMKLGPRRGDGAPMAIIELV.

Belongs to the bacterial ribosomal protein bL17 family. As to quaternary structure, part of the 50S ribosomal subunit. Contacts protein L32.

The sequence is that of Large ribosomal subunit protein bL17 from Bacillus velezensis (strain DSM 23117 / BGSC 10A6 / LMG 26770 / FZB42) (Bacillus amyloliquefaciens subsp. plantarum).